The following is a 518-amino-acid chain: Membrane-bound lytic murein transglycosylase F (518 aa).

An N-terminal signal peptide occupies residues 1–21 (MKKLKINYLFIGILALLLAVA). Residues 22–269 (LWPSIPWFGK…RIEEKYLGHG (248 aa)) form a non-LT domain region. An LT domain region spans residues 270-518 (DDFDYVDTRT…SRKGSEEKQN (249 aa)). The active site involves Glu-314.

The protein in the N-terminal section; belongs to the bacterial solute-binding protein 3 family. In the C-terminal section; belongs to the transglycosylase Slt family.

The protein resides in the cell outer membrane. It catalyses the reaction Exolytic cleavage of the (1-&gt;4)-beta-glycosidic linkage between N-acetylmuramic acid (MurNAc) and N-acetylglucosamine (GlcNAc) residues in peptidoglycan, from either the reducing or the non-reducing ends of the peptidoglycan chains, with concomitant formation of a 1,6-anhydrobond in the MurNAc residue.. In terms of biological role, murein-degrading enzyme that degrades murein glycan strands and insoluble, high-molecular weight murein sacculi, with the concomitant formation of a 1,6-anhydromuramoyl product. Lytic transglycosylases (LTs) play an integral role in the metabolism of the peptidoglycan (PG) sacculus. Their lytic action creates space within the PG sacculus to allow for its expansion as well as for the insertion of various structures such as secretion systems and flagella. This Shigella sonnei (strain Ss046) protein is Membrane-bound lytic murein transglycosylase F.